Reading from the N-terminus, the 766-residue chain is Dipeptidyl peptidase 4 (766 aa).

Residues Met-1–Lys-6 lie on the Cytoplasmic side of the membrane. A helical; Signal-anchor for type II membrane protein membrane pass occupies residues Val-7–Leu-27. Residues Leu-28–Pro-766 are Extracellular-facing. Residues Asn-85, Asn-92, Asn-150, Asn-179, Asn-219, Asn-229, Asn-279, and Asn-321 are each glycosylated (N-linked (GlcNAc...) asparagine). Cystine bridges form between Cys-385-Cys-394, Cys-444-Cys-447, and Cys-454-Cys-472. Residue Ser-630 is the Charge relay system of the active site. Cys-649 and Cys-762 are disulfide-bonded. The N-linked (GlcNAc...) asparagine glycan is linked to Asn-685. Active-site charge relay system residues include Asp-708 and His-740.

It belongs to the peptidase S9B family. DPPIV subfamily. In terms of assembly, monomer. Homodimer. Heterodimer with Seprase (FAP). Requires homodimerization for optimal dipeptidyl peptidase activity and T-cell costimulation. Found in a membrane raft complex, at least composed of BCL10, CARD11, DPP4 and IKBKB. Associates with collagen. Interacts with PTPRC; the interaction is enhanced in an interleukin-12-dependent manner in activated lymphocytes. Interacts (via extracellular domain) with ADA; does not inhibit its dipeptidyl peptidase activity. Interacts with CAV1 (via the N-terminus); the interaction is direct. Interacts (via cytoplasmic tail) with CARD11 (via PDZ domain); its homodimerization is necessary for interaction with CARD11. Interacts with IGF2R; the interaction is direct. Interacts with GPC3. Post-translationally, the soluble form (Dipeptidyl peptidase 4 soluble form also named SDPP) derives from the membrane form (Dipeptidyl peptidase 4 membrane form also named MDPP) by proteolytic processing. N- and O-Glycosylated. In terms of processing, phosphorylated. Mannose 6-phosphate residues in the carbohydrate moiety are necessary for interaction with IGF2R in activated T-cells. Mannose 6-phosphorylation is induced during T-cell activation.

Its subcellular location is the secreted. The protein localises to the cell membrane. It localises to the apical cell membrane. It is found in the cell projection. The protein resides in the invadopodium membrane. Its subcellular location is the lamellipodium membrane. The protein localises to the cell junction. It localises to the membrane raft. It carries out the reaction Release of an N-terminal dipeptide, Xaa-Yaa-|-Zaa-, from a polypeptide, preferentially when Yaa is Pro, provided Zaa is neither Pro nor hydroxyproline.. Its activity is regulated as follows. Inhibited by GPC3 and diprotin A. Cell surface glycoprotein receptor involved in the costimulatory signal essential for T-cell receptor (TCR)-mediated T-cell activation. Acts as a positive regulator of T-cell coactivation, by binding at least ADA, CAV1, IGF2R, and PTPRC. Its binding to CAV1 and CARD11 induces T-cell proliferation and NF-kappa-B activation in a T-cell receptor/CD3-dependent manner. Its interaction with ADA also regulates lymphocyte-epithelial cell adhesion. In association with FAP is involved in the pericellular proteolysis of the extracellular matrix (ECM), the migration and invasion of endothelial cells into the ECM. May be involved in the promotion of lymphatic endothelial cells adhesion, migration and tube formation. When overexpressed, enhanced cell proliferation, a process inhibited by GPC3. Also acts as a serine exopeptidase with a dipeptidyl peptidase activity that regulates various physiological processes by cleaving peptides in the circulation, including many chemokines, mitogenic growth factors, neuropeptides and peptide hormones such as brain natriuretic peptide 32. Removes N-terminal dipeptides sequentially from polypeptides having unsubstituted N-termini provided that the penultimate residue is proline. The sequence is that of Dipeptidyl peptidase 4 (DPP4) from Sus scrofa (Pig).